We begin with the raw amino-acid sequence, 159 residues long: MVQDGNPPDDNVFRAFCNALYNTVDAPVTWFRETVVEPNQKKYPWYHQNYRRVPTIDQCYDDDVVCDFEANAQFKRDRAVDSEILSILRQRYEDCMMYEQPDHATKCRSLWDKYKSAEEAWFIKYGDLGAYGDARKAYMKQKHRMVWERRNGPLSDLTK.

Belongs to the complex I NDUFB10 subunit family. Complex I is composed of 45 different subunits.

The protein localises to the mitochondrion inner membrane. Its function is as follows. Accessory subunit of the mitochondrial membrane respiratory chain NADH dehydrogenase (Complex I), that is believed not to be involved in catalysis. Complex I functions in the transfer of electrons from NADH to the respiratory chain. The immediate electron acceptor for the enzyme is believed to be ubiquinone. The protein is NADH dehydrogenase [ubiquinone] 1 beta subcomplex subunit 10 of Bombyx mori (Silk moth).